The sequence spans 404 residues: Argininosuccinate synthase (404 aa).

9-17 (AYSGGLDTS) lines the ATP pocket. An L-citrulline-binding site is contributed by tyrosine 86. Glycine 116 is an ATP binding site. L-aspartate contacts are provided by threonine 118, asparagine 122, and aspartate 123. Asparagine 122 lines the L-citrulline pocket. L-citrulline-binding residues include arginine 126, serine 174, serine 183, glutamate 259, and tyrosine 271.

The protein belongs to the argininosuccinate synthase family. Type 1 subfamily. Homotetramer.

It is found in the cytoplasm. It carries out the reaction L-citrulline + L-aspartate + ATP = 2-(N(omega)-L-arginino)succinate + AMP + diphosphate + H(+). Its pathway is amino-acid biosynthesis; L-arginine biosynthesis; L-arginine from L-ornithine and carbamoyl phosphate: step 2/3. This chain is Argininosuccinate synthase, found in Listeria monocytogenes serovar 1/2a (strain ATCC BAA-679 / EGD-e).